Here is a 238-residue protein sequence, read N- to C-terminus: MSDSTKPSLPSASIGNIHIDPTGFVKLGAQLPTLANILAQAIDELGITLSAQQQRTLLLYLDQLLLWNKAYNLTAITDPVEALIKHVIDCLAIITHLPSGSLLDIGTGAGLPAVIIAICQPERSCTALDSNQKKIRFIKQISSELGLSNMQPIASRIEAHEVSYDVVTSRAFASLIDFVEVAQPRLADNGYLCAMKGKAPSEEERHVLGNDWQFKTIKLNVPRLHDSRHLIELSYKNV.

S-adenosyl-L-methionine contacts are provided by residues Gly-106, Leu-111, 157–158 (IE), and Arg-170.

The protein belongs to the methyltransferase superfamily. RNA methyltransferase RsmG family.

The protein localises to the cytoplasm. It carries out the reaction guanosine(527) in 16S rRNA + S-adenosyl-L-methionine = N(7)-methylguanosine(527) in 16S rRNA + S-adenosyl-L-homocysteine. Functionally, specifically methylates the N7 position of guanine in position 527 of 16S rRNA. In Psychrobacter arcticus (strain DSM 17307 / VKM B-2377 / 273-4), this protein is Ribosomal RNA small subunit methyltransferase G.